The sequence spans 111 residues: UPF0125 protein SO_1475 (111 aa).

The segment at 88–111 (VRRRRADKAKDEGRANKVTGGRVS) is disordered.

It belongs to the UPF0125 (RnfH) family.

This chain is UPF0125 protein SO_1475, found in Shewanella oneidensis (strain ATCC 700550 / JCM 31522 / CIP 106686 / LMG 19005 / NCIMB 14063 / MR-1).